Reading from the N-terminus, the 368-residue chain is Flap endonuclease 1 (368 aa).

Residues 1–104 (MGIHDLSKVI…GELLKRGARR (104 aa)) are N-domain. Aspartate 34 serves as a coordination point for Mg(2+). DNA-binding residues include arginine 47 and arginine 70. Residue aspartate 86 coordinates Mg(2+). Residues 103–123 (RRKEAQANLEEATEQGDTEQM) form a disordered region. Residues 122–251 (QMEKFSRRLV…QKAYQLIKEH (130 aa)) form an I-domain region. 4 residues coordinate Mg(2+): glutamate 158, glutamate 160, aspartate 179, and aspartate 181. Glutamate 158 contacts DNA. DNA is bound by residues glycine 229 and aspartate 231. Residue aspartate 231 participates in Mg(2+) binding. The segment at 334–342 (QQGRLDSFF) is interaction with PCNA.

It belongs to the XPG/RAD2 endonuclease family. FEN1 subfamily. In terms of assembly, interacts with PCNA. Three molecules of FEN1 bind to one PCNA trimer with each molecule binding to one PCNA monomer. PCNA stimulates the nuclease activity without altering cleavage specificity. Requires Mg(2+) as cofactor. Phosphorylated. Phosphorylation upon DNA damage induces relocalization to the nuclear plasma.

It localises to the nucleus. The protein localises to the nucleolus. The protein resides in the nucleoplasm. Its subcellular location is the mitochondrion. Structure-specific nuclease with 5'-flap endonuclease and 5'-3' exonuclease activities involved in DNA replication and repair. During DNA replication, cleaves the 5'-overhanging flap structure that is generated by displacement synthesis when DNA polymerase encounters the 5'-end of a downstream Okazaki fragment. It enters the flap from the 5'-end and then tracks to cleave the flap base, leaving a nick for ligation. Also involved in the long patch base excision repair (LP-BER) pathway, by cleaving within the apurinic/apyrimidinic (AP) site-terminated flap. Acts as a genome stabilization factor that prevents flaps from equilibrating into structures that lead to duplications and deletions. Also possesses 5'-3' exonuclease activity on nicked or gapped double-stranded DNA, and exhibits RNase H activity. Also involved in replication and repair of rDNA and in repairing mitochondrial DNA. The protein is Flap endonuclease 1 of Monosiga brevicollis (Choanoflagellate).